A 183-amino-acid polypeptide reads, in one-letter code: Ribosome maturation factor RimP (183 aa).

The protein belongs to the RimP family.

It is found in the cytoplasm. Its function is as follows. Required for maturation of 30S ribosomal subunits. The protein is Ribosome maturation factor RimP of Leptothrix cholodnii (strain ATCC 51168 / LMG 8142 / SP-6) (Leptothrix discophora (strain SP-6)).